The primary structure comprises 672 residues: Beta-galactosidase BgaB (672 aa).

Substrate is bound at residue arginine 109. Zn(2+) is bound at residue cysteine 113. Residue asparagine 147 coordinates substrate. The Proton donor role is filled by glutamate 148. Zn(2+)-binding residues include cysteine 156, cysteine 158, and cysteine 161. The Nucleophile role is filled by glutamate 303. Residues tryptophan 311 and 351–354 (EKFH) contribute to the substrate site.

This sequence belongs to the glycosyl hydrolase 42 family.

The catalysed reaction is Hydrolysis of terminal non-reducing beta-D-galactose residues in beta-D-galactosides.. This is Beta-galactosidase BgaB from Geobacillus sp. (strain Y412MC61).